The primary structure comprises 277 residues: Diaminopimelate epimerase (277 aa).

The substrate site is built by Asn-15, Gln-48, and Asn-66. Cys-75 (proton donor) is an active-site residue. Substrate-binding positions include 76–77, Asn-156, Asn-189, and 207–208; these read GN and ER. Catalysis depends on Cys-216, which acts as the Proton acceptor. 217-218 contacts substrate; that stretch reads GS.

It belongs to the diaminopimelate epimerase family. Homodimer.

The protein resides in the cytoplasm. It catalyses the reaction (2S,6S)-2,6-diaminopimelate = meso-2,6-diaminopimelate. It functions in the pathway amino-acid biosynthesis; L-lysine biosynthesis via DAP pathway; DL-2,6-diaminopimelate from LL-2,6-diaminopimelate: step 1/1. Catalyzes the stereoinversion of LL-2,6-diaminopimelate (L,L-DAP) to meso-diaminopimelate (meso-DAP), a precursor of L-lysine and an essential component of the bacterial peptidoglycan. The chain is Diaminopimelate epimerase from Acidiphilium cryptum (strain JF-5).